We begin with the raw amino-acid sequence, 295 residues long: Diaminopimelate epimerase (295 aa).

3 residues coordinate substrate: Asn13, Gln46, and Asn66. Cys75 functions as the Proton donor in the catalytic mechanism. Substrate contacts are provided by residues 76 to 77, Asn162, Asn195, and 213 to 214; these read GN and ER. Residue Cys222 is the Proton acceptor of the active site. Residue 223–224 coordinates substrate; sequence GT.

This sequence belongs to the diaminopimelate epimerase family. Homodimer.

Its subcellular location is the cytoplasm. The enzyme catalyses (2S,6S)-2,6-diaminopimelate = meso-2,6-diaminopimelate. It participates in amino-acid biosynthesis; L-lysine biosynthesis via DAP pathway; DL-2,6-diaminopimelate from LL-2,6-diaminopimelate: step 1/1. In terms of biological role, catalyzes the stereoinversion of LL-2,6-diaminopimelate (L,L-DAP) to meso-diaminopimelate (meso-DAP), a precursor of L-lysine and an essential component of the bacterial peptidoglycan. This Psychrobacter arcticus (strain DSM 17307 / VKM B-2377 / 273-4) protein is Diaminopimelate epimerase.